Here is a 540-residue protein sequence, read N- to C-terminus: MPTINIYKWRLLNELKISETQLEDLLFNLKSEMKPIDQDHIEIEINNDRPDLLFVYGIIRSIKGLLKKELGEPRYSVKDTDYVFEIKEVPSRPYALAAVVEDIKFDDELLKELIQFQEKLHITVGRKRKKIAIGLHDLKKIDSKHIIYTTVNLDYKFIPLNSDKEMSVREILESTPQGKEYGNISLLDGKMPAIMQDDGQILSLPPVINSEKTRINSKTQSLFIDVTGTSLDTVIFTLDVIVTNLAEMGGKIGRIKVISPYVDNSPLLQHKSIKITAEYINKILGTNLNKNEIIEYLKMARFDVNDLGKEIEVIIPPYRNDILSQIDITEEVAITYGYNNLSPTPYKIEKIGSLSDRTKLIRVLRDLSVGGGFTEIFTFTLISESLLLGDFVKILNPITVDYNSVRNSLLPSILIFLSKNQHARMPIRVFEIGDVVIRNENTETGYSNKLNAAYAIMNSRVSFEELQAPLHEILNSLGINPIYKRDTNPLFIEGRTASIYANNKKIGIIGEINPNILEKIDIEYPIVMSEIYLDEIKDIL.

A B5 domain is found at 268-343 (LQHKSIKITA…ITYGYNNLSP (76 aa)). The Mg(2+) site is built by D321, D327, E330, and E331.

The protein belongs to the phenylalanyl-tRNA synthetase beta subunit family. Type 2 subfamily. Tetramer of two alpha and two beta subunits. Mg(2+) is required as a cofactor.

It is found in the cytoplasm. It carries out the reaction tRNA(Phe) + L-phenylalanine + ATP = L-phenylalanyl-tRNA(Phe) + AMP + diphosphate + H(+). The sequence is that of Phenylalanine--tRNA ligase beta subunit from Sulfurisphaera tokodaii (strain DSM 16993 / JCM 10545 / NBRC 100140 / 7) (Sulfolobus tokodaii).